Reading from the N-terminus, the 584-residue chain is Arginine--tRNA ligase (584 aa).

Residues Pro-125–His-135 carry the 'HIGH' region motif.

This sequence belongs to the class-I aminoacyl-tRNA synthetase family. Monomer.

Its subcellular location is the cytoplasm. The enzyme catalyses tRNA(Arg) + L-arginine + ATP = L-arginyl-tRNA(Arg) + AMP + diphosphate. The polypeptide is Arginine--tRNA ligase (Thermosynechococcus vestitus (strain NIES-2133 / IAM M-273 / BP-1)).